The sequence spans 270 residues: tRNA pseudouridine synthase A (270 aa).

Asp51 serves as the catalytic Nucleophile. Position 109 (Tyr109) interacts with substrate.

It belongs to the tRNA pseudouridine synthase TruA family. In terms of assembly, homodimer.

It carries out the reaction uridine(38/39/40) in tRNA = pseudouridine(38/39/40) in tRNA. Functionally, formation of pseudouridine at positions 38, 39 and 40 in the anticodon stem and loop of transfer RNAs. This is tRNA pseudouridine synthase A from Burkholderia ambifaria (strain ATCC BAA-244 / DSM 16087 / CCUG 44356 / LMG 19182 / AMMD) (Burkholderia cepacia (strain AMMD)).